We begin with the raw amino-acid sequence, 670 residues long: Probable Na(+)/H(+) antiporter nhx-3 (670 aa).

8 consecutive transmembrane segments (helical) span residues 41-61 (VYVITTWLLVASLAKILFNLM), 73-93 (LLIIVGLGLGYFLNQTTLSGV), 97-117 (SHAFFLYLLPPIIFDAGYFMP), 129-149 (LVFSVLGTLWNTFAIGGSLLI), 164-184 (EILVFSALISAVDPVAVIAIF), 192-212 (FLFINVFGEALFNDGVTVVLY), 235-255 (GLSFFVVALGGAAIGIIFAIA), and 268-288 (ILAPVFIFLLPYMAYLTAEMV). Asn310 carries an N-linked (GlcNAc...) asparagine glycan. 4 helical membrane-spanning segments follow: residues 325–345 (MLAQCSETVIFMFLGLSTLTS), 351–371 (FIFIGATLVFCLIYRAIGIIV), 390–410 (FILSYGGLRGAIAYGLVVSIP), and 418–438 (MFITTTICVIYFTVFLQGITI). The interval 648–670 (GDLKGHCGTSRKPKHSMFELRHV) is disordered.

This sequence belongs to the monovalent cation:proton antiporter 1 (CPA1) transporter (TC 2.A.36) family. Post-translationally, phosphorylated. As to expression, expressed in hypodermal cells of the main body syncytium, ut1 cells of the vulva and the spermathecal junction cell.

It localises to the endomembrane system. Its function is as follows. Plays a role in epithelial membrane transport processes. The chain is Probable Na(+)/H(+) antiporter nhx-3 (nhx-3) from Caenorhabditis elegans.